The following is a 100-amino-acid chain: Urease subunit gamma (100 aa).

This sequence belongs to the urease gamma subunit family. As to quaternary structure, heterotrimer of UreA (gamma), UreB (beta) and UreC (alpha) subunits. Three heterotrimers associate to form the active enzyme.

The protein localises to the cytoplasm. The catalysed reaction is urea + 2 H2O + H(+) = hydrogencarbonate + 2 NH4(+). It participates in nitrogen metabolism; urea degradation; CO(2) and NH(3) from urea (urease route): step 1/1. This Burkholderia mallei (strain NCTC 10247) protein is Urease subunit gamma.